A 1099-amino-acid polypeptide reads, in one-letter code: SLIT-ROBO Rho GTPase-activating protein 3 (1099 aa).

The region spanning 19-314 is the F-BAR domain; it reads AQIKEIRTQL…AVDNLDSRSD (296 aa). The interval 205-225 is disordered; sequence HEDRPQRRSSVKKIEKMKEKR. The stretch at 352 to 392 forms a coiled coil; sequence QTELLMRYHQLQSRLATLKIENEEVRKTLDATMQTLQDMLT. The segment at 471–493 is disordered; that stretch reads ERAECGTTRPPCLPPKPQKMRRP. Positions 506–694 constitute a Rho-GAP domain; that stretch reads GSMEAFIKDS…TIIIHHEAIF (189 aa). Residues 744 to 803 form the SH3 domain; sequence VEQIEAIAKFDYMGRSPRELSFKKGASLLLYHRASEDWWEGRHNGVDGLIPHQYIVVQDM. Residues 809-820 show a composition bias toward polar residues; sequence DSLSQKADSEAS. Residues 809-847 form a disordered region; that stretch reads DSLSQKADSEASSGPLLDDKASSKNDLQSPTEHISDYGF. Residues serine 817, serine 820, serine 821, serine 837, and serine 858 each carry the phosphoserine modification. Disordered stretches follow at residues 861–911 and 926–950; these read AAIP…SPEK and PDKK…SSLG. Over residues 926–936 the composition is skewed to basic and acidic residues; it reads PDKKALSEGHS. Polar residues predominate over residues 937–947; the sequence is MRSTCGSTRHS. Residues 952–987 are a coiled coil; sequence HKSLEAEALAEDIEKTMSTALHELRELERQNTVKQA. Phosphoserine is present on serine 954. The tract at residues 995-1099 is disordered; the sequence is LEPLKNPPGP…NSSADKSGTM (105 aa). 2 stretches are compositionally biased toward low complexity: residues 1026 to 1038 and 1060 to 1074; these read RRSS…MMTT and VRPV…SSSS. Residues 1089-1099 show a composition bias toward polar residues; it reads PNSSADKSGTM.

Homodimer. Forms a heterooligomer with SRGAP1 and SRGAP2 through its F-BAR domain. Interacts with WASF1. Probably interacts with ROBO1. Interacts with FASLG. As to expression, highly expressed in adult and fetal brain. Expressed at low levels in kidney. Isoform 3 is expressed in the kidney but is absent in the brain.

Functionally, GTPase-activating protein for RAC1 and perhaps Cdc42, but not for RhoA small GTPase. May attenuate RAC1 signaling in neurons. The protein is SLIT-ROBO Rho GTPase-activating protein 3 (SRGAP3) of Homo sapiens (Human).